We begin with the raw amino-acid sequence, 183 residues long: MTETPMMDDLERVLYNQDDIQKRIRELAAELTEFYEDKNPVMICVLTGAVFFYTDLLKHLDFQLEPDYIICSSYSGTKSTGNLTISKDLKTNIEGRHVLVVEDIIDTGLTMYQLLNNLQMRKPASLKVCTLCDKDIGKKAYDVPIDYCGFVVENRYIIGYGFDFHNKYRNLPVIGILKESVYT.

GMP contacts are provided by residues 102-110, K134, and D163; that span reads EDIIDTGLT. Residue D106 is the Proton acceptor of the active site. Position 163 (D163) interacts with Mg(2+).

In terms of assembly, homodimer. The cofactor is Mg(2+).

It is found in the cytoplasm. The catalysed reaction is IMP + diphosphate = hypoxanthine + 5-phospho-alpha-D-ribose 1-diphosphate. The enzyme catalyses GMP + diphosphate = guanine + 5-phospho-alpha-D-ribose 1-diphosphate. It carries out the reaction XMP + diphosphate = xanthine + 5-phospho-alpha-D-ribose 1-diphosphate. It participates in purine metabolism; GMP biosynthesis via salvage pathway; GMP from guanine: step 1/1. Its pathway is purine metabolism; IMP biosynthesis via salvage pathway; IMP from hypoxanthine: step 1/1. It functions in the pathway purine metabolism; XMP biosynthesis via salvage pathway; XMP from xanthine: step 1/1. Essential in nucleic acid metabolism of T.foetus because the parasite is unable to synthesize purine nucleotides de novo and relies on the HGXPRTase activities for its purine requirements by salvaging purine bases from the host. Works with guanine, hypoxanthine and xanthine. The polypeptide is Hypoxanthine-guanine-xanthine phosphoribosyltransferase (HPT) (Tritrichomonas foetus (Trichomonas foetus)).